The chain runs to 653 residues: Modification methylase StsI (653 aa).

Belongs to the N(4)/N(6)-methyltransferase family. In terms of assembly, monomer.

It carries out the reaction a 2'-deoxyadenosine in DNA + S-adenosyl-L-methionine = an N(6)-methyl-2'-deoxyadenosine in DNA + S-adenosyl-L-homocysteine + H(+). Functionally, an alpha subtype methylase that recognizes the double-stranded sequence 5'-GGATG-3' in one strand and 3'-CATCC-5' in the other, methylates A of both strands, and protects the DNA from cleavage by the StsI endonuclease. The 2 domains of the protein participate in modification of the two strands. In Streptococcus sanguinis, this protein is Modification methylase StsI (stsIM).